We begin with the raw amino-acid sequence, 372 residues long: Queuine tRNA-ribosyltransferase (372 aa).

Aspartate 92 (proton acceptor) is an active-site residue. Substrate is bound by residues 92-96 (DSGGY), aspartate 146, glutamine 188, and glycine 215. An RNA binding region spans residues 246-252 (GIGSLKE). Aspartate 265 (nucleophile) is an active-site residue. An RNA binding; important for wobble base 34 recognition region spans residues 270–274 (TRLGR). Cysteine 303, cysteine 305, cysteine 308, and histidine 334 together coordinate Zn(2+).

The protein belongs to the queuine tRNA-ribosyltransferase family. Homodimer. Within each dimer, one monomer is responsible for RNA recognition and catalysis, while the other monomer binds to the replacement base PreQ1. Zn(2+) is required as a cofactor.

The catalysed reaction is 7-aminomethyl-7-carbaguanine + guanosine(34) in tRNA = 7-aminomethyl-7-carbaguanosine(34) in tRNA + guanine. It functions in the pathway tRNA modification; tRNA-queuosine biosynthesis. Functionally, catalyzes the base-exchange of a guanine (G) residue with the queuine precursor 7-aminomethyl-7-deazaguanine (PreQ1) at position 34 (anticodon wobble position) in tRNAs with GU(N) anticodons (tRNA-Asp, -Asn, -His and -Tyr). Catalysis occurs through a double-displacement mechanism. The nucleophile active site attacks the C1' of nucleotide 34 to detach the guanine base from the RNA, forming a covalent enzyme-RNA intermediate. The proton acceptor active site deprotonates the incoming PreQ1, allowing a nucleophilic attack on the C1' of the ribose to form the product. After dissociation, two additional enzymatic reactions on the tRNA convert PreQ1 to queuine (Q), resulting in the hypermodified nucleoside queuosine (7-(((4,5-cis-dihydroxy-2-cyclopenten-1-yl)amino)methyl)-7-deazaguanosine). This is Queuine tRNA-ribosyltransferase from Prochlorococcus marinus (strain MIT 9515).